Reading from the N-terminus, the 136-residue chain is uncharacterized protein (136 aa).

Residues 102–118 traverse the membrane as a helical segment; sequence FVIVFFFFSFSLSISCV.

The protein resides in the membrane. This is an uncharacterized protein from Saccharomyces cerevisiae (strain ATCC 204508 / S288c) (Baker's yeast).